A 221-amino-acid polypeptide reads, in one-letter code: Tumor protein p53-inducible nuclear protein 2 (221 aa).

The short motif at 26–41 (VSEEDEVDGWLIIDLQ) is the LIR element. Residues 41-68 (QDSYTAPPDPGASPAPAGRPPPAPSLMD) are disordered. Residues 47–64 (PPDPGASPAPAGRPPPAP) show a composition bias toward pro residues. S136 carries the phosphoserine modification. Positions 177-210 (RQRAERHTLSAKVLQRQNRARESRSRRPKHQGSF) are disordered.

As to quaternary structure, interacts with VMP1, GABARAP, GABARAPL1, GABARAPL2, MAP1LC3A, MAP1LC3B, MAP1LC3C and THRA.

The protein localises to the cytoplasm. The protein resides in the cytosol. Its subcellular location is the nucleus. It is found in the PML body. It localises to the cytoplasmic vesicle. The protein localises to the autophagosome. Functionally, dual regulator of transcription and autophagy. Positively regulates autophagy and is required for autophagosome formation and processing. May act as a scaffold protein that recruits MAP1LC3A, GABARAP and GABARAPL2 and brings them to the autophagosome membrane by interacting with VMP1 where, in cooperation with the BECN1-PI3-kinase class III complex, they trigger autophagosome development. Acts as a transcriptional activator of THRA. The chain is Tumor protein p53-inducible nuclear protein 2 (Tp53inp2) from Mus musculus (Mouse).